Here is a 141-residue protein sequence, read N- to C-terminus: Large ribosomal subunit protein uL16 (141 aa).

It belongs to the universal ribosomal protein uL16 family. Part of the 50S ribosomal subunit.

In terms of biological role, binds 23S rRNA and is also seen to make contacts with the A and possibly P site tRNAs. The sequence is that of Large ribosomal subunit protein uL16 from Geobacillus kaustophilus (strain HTA426).